The chain runs to 966 residues: MANPQEHLSCSSSPRLPLSENKTFNGLQDDLAPMGSHASPKLLKDQQEKGMVQTELAEGTNSPITTTVLTSISEDSRDQFENSVLQLREQDESEMAMSHGNSNTVDGEGTSGTEDIKIQFSRSGSGSGGFLEGLFGCLRPVWNIIGKAYSTDYKLQQQDTWEVPFEEISELQWLGSGAQGAVFLGKFRAEEVAIKKVREQNETDIKHLRKLKHPNIIAFKGVCTQAPCYCIIMEYCAHGQLYEVLRAGRKITPRLLVDWSTGIASGMNYLHLHKIIHRDLKSPNVLVTHTDAVKISDFGTSKELSDKSTKMSFAGTVAWMAPEVIRNEPVSEKVDIWSFGVVLWELLTGEIPYKDVDSSAIIWGVGSNSLHLPVPSTCPDGFKILMKQTWQSKTRNRPSFRQTLMHLDIASADVLATPQETYFKSQAEWREEVKKHFEKIKSEGTCIHRLDEELIRRRREELRHALDIREHYERKLERANNLYMELSAIMLQLEMREKELIKREQAVEKKYPGTYKRHPVRPIIHPNAMEKLMKRKGMPHRPGMQAKRPDLLRSEGIPSVEVAPTASPLSGSPKLSSSSSKSRYRSKPRHRRGNSRGSHGDFAAILKNQPAQEDSPHPTSLHQAEPQYPSSQHHNLLQQQYQQPPPAMSQSHHPRLNMHGQDIATCPNNLRYFGPAAALRSPLSNHSQRQMPGSSPDLISTAMAADCWRSSEPDKGQAGPWGCCQADPYDPCLQCRPEQHGSLDVPSAKPVGRSPSLFKPPAHNPLLENAQGSEKMEENEFSGYRSASSLGASHHITPPVLPRKTRPLQKSGDDSSEEEEGEVDSEVEFPRRQRPHRCISSCQSYSTFSSENFSVSDGEEGNTSDHSNSPDELADKLEDHLAEKLDDLLSQTPEIPIEISSHSDGLSDKECAVRRVKTQMSLGKLCAEERGYENPMQFEESDCDSSDGECSDATVRTNKHYSSATW.

Residues 1 to 59 (MANPQEHLSCSSSPRLPLSENKTFNGLQDDLAPMGSHASPKLLKDQQEKGMVQTELAEG) are disordered. A compositionally biased stretch (low complexity) spans 8 to 19 (LSCSSSPRLPLS). Positions 168–409 (ISELQWLGSG…FRQTLMHLDI (242 aa)) constitute a Protein kinase domain. ATP is bound by residues 174–182 (LGSGAQGAV) and Lys-195. The active-site Proton acceptor is the Asp-279. Leucine-zipper stretches follow at residues 433–454 (VKKH…DEEL) and 486–507 (LSAI…EQAV). Residues 457 to 496 (RRREELRHALDIREHYERKLERANNLYMELSAIMLQLEMR) are a coiled coil. Disordered stretches follow at residues 561–663 (EVAP…GQDI), 743–874 (LDVP…DELA), and 937–966 (QFEE…SATW). The segment covering 567–581 (SPLSGSPKLSSSSSK) has biased composition (low complexity). The segment covering 582–594 (SRYRSKPRHRRGN) has biased composition (basic residues). Polar residues predominate over residues 609–622 (QPAQEDSPHPTSLH). A compositionally biased stretch (low complexity) spans 629-642 (PSSQHHNLLQQQYQ). Residues 814–827 (DSSEEEEGEVDSEV) show a composition bias toward acidic residues. Residues 815-828 (SSEEEEGEVDSEVE) are acidic. A compositionally biased stretch (polar residues) spans 840–855 (SSCQSYSTFSSENFSV). Acidic residues predominate over residues 939–950 (EESDCDSSDGEC). Over residues 954–966 (TVRTNKHYSSATW) the composition is skewed to polar residues.

It belongs to the protein kinase superfamily. Ser/Thr protein kinase family. As to quaternary structure, homodimer; forms dimers through the leucine-zipper motif. Interacts with the C-terminus of MAPK8IP1 through the kinase catalytic domain. Binds PRDX3. Associates with the IKK complex through the kinase domain. Mg(2+) serves as cofactor. Post-translationally, autophosphorylated on serine and threonine residues.

It localises to the cytoplasm. The protein resides in the membrane. The enzyme catalyses L-seryl-[protein] + ATP = O-phospho-L-seryl-[protein] + ADP + H(+). It catalyses the reaction L-threonyl-[protein] + ATP = O-phospho-L-threonyl-[protein] + ADP + H(+). Activated by autophosphorylation and homodimerization. In terms of biological role, activates the JUN N-terminal pathway through activation of the MAP kinase kinase MAP2K7. Acts synergistically with PRDX3 to regulate the activation of NF-kappa-B in the cytosol. This activation is kinase-dependent and involves activating the IKK complex, the IKBKB-containing complex that phosphorylates inhibitors of NF-kappa-B. The protein is Mitogen-activated protein kinase kinase kinase 13 (MAP3K13) of Bos taurus (Bovine).